Consider the following 353-residue polypeptide: Protein Wnt-11b-2 (353 aa).

The N-terminal stretch at 1–22 is a signal peptide; sequence MALIRHCVTLLLILCCSRLCGA. N-linked (GlcNAc...) asparagine glycosylation is found at asparagine 31, asparagine 38, and asparagine 88. 5 cysteine pairs are disulfide-bonded: cysteine 78–cysteine 89, cysteine 128–cysteine 136, cysteine 138–cysteine 155, cysteine 208–cysteine 222, and cysteine 210–cysteine 217. A lipid anchor (O-palmitoleoyl serine; by PORCN) is attached at serine 214. Residues tyrosine 274 and tyrosine 281 each carry the sulfotyrosine modification. Disulfide bonds link cysteine 282–cysteine 313, cysteine 298–cysteine 308, cysteine 312–cysteine 352, cysteine 328–cysteine 343, cysteine 330–cysteine 340, and cysteine 335–cysteine 336. N-linked (GlcNAc...) asparagine glycosylation is present at asparagine 299.

The protein belongs to the Wnt family. In terms of assembly, homodimer. Secreted homodimers form a complex with wnt5a homodimers; tyrosine sulfation of both wnt11 and wnt5a by tpst1 is required for this interaction. Interacts with the transmembrane receptor fzd7/fz7. Interacts with lrp6 and ryk. Interacts with tdgf1/frl1. Interacts weakly with frzb1 and strongly with frzb2/crescent. Interaction with frzb2/crescent antagonizes wnt11 function in the neuroectoderm, but enhances it in mesodermal tissue. Post-translationally, glycosylation is required for protein secretion. In terms of processing, palmitoleoylation is required for efficient binding to frizzled receptors. Depalmitoleoylation leads to Wnt signaling pathway inhibition.

It localises to the secreted. Its subcellular location is the extracellular space. The protein localises to the extracellular matrix. Its function is as follows. Ligand for the frizzled7 transmembrane receptor. Primarily acts via non-canonical Wnt pathways mediated by either Ca(2+) and PKC, or by JNK and dvl2/dsh. Depending on the cellular context, can also signal via the canonical Wnt pathway mediated by beta-catenin and dvl2/dsh. May also inhibit canonical Wnt signaling. Maternally initiates dorsal/ventral axis formation by a canonical route, which signals via lrp6. In a complex with wnt5a, activates the canonical and non-canonical processes involved in axis formation. In the non-canonical pathway, acts through fzd7/fz7 to induce phosphorylation of dvl2/dsh. Signals through a non-canonical Wnt pathway to regulate convergent extension movements during gastrulation. Interactions with the secreted Wnt antagonist sfrp5 to coordinate foregut development, acting via a non-canonical wnt pathway whereby sfrp5 restricts wnt11b activity to prevent inappropriate foregut formation. Mediates cardiogenesis via non-canonical Wnt signaling involving JNK-activation and PKC. Acts redundantly with wnt11/wnt11r during pronephros induction. The protein is Protein Wnt-11b-2 of Xenopus tropicalis (Western clawed frog).